Here is a 130-residue protein sequence, read N- to C-terminus: Small ribosomal subunit protein uS9 (130 aa).

It belongs to the universal ribosomal protein uS9 family.

The protein is Small ribosomal subunit protein uS9 of Salmonella paratyphi C (strain RKS4594).